A 479-amino-acid polypeptide reads, in one-letter code: UDP-N-acetylmuramate--L-alanine ligase (479 aa).

127 to 133 lines the ATP pocket; it reads GTHGKTT.

Belongs to the MurCDEF family.

It is found in the cytoplasm. The catalysed reaction is UDP-N-acetyl-alpha-D-muramate + L-alanine + ATP = UDP-N-acetyl-alpha-D-muramoyl-L-alanine + ADP + phosphate + H(+). The protein operates within cell wall biogenesis; peptidoglycan biosynthesis. Functionally, cell wall formation. In Shewanella denitrificans (strain OS217 / ATCC BAA-1090 / DSM 15013), this protein is UDP-N-acetylmuramate--L-alanine ligase.